The following is a 313-amino-acid chain: Elongation factor Ts (313 aa).

The tract at residues 82–85 is involved in Mg(2+) ion dislocation from EF-Tu; it reads TDFV.

Belongs to the EF-Ts family.

The protein localises to the cytoplasm. In terms of biological role, associates with the EF-Tu.GDP complex and induces the exchange of GDP to GTP. It remains bound to the aminoacyl-tRNA.EF-Tu.GTP complex up to the GTP hydrolysis stage on the ribosome. The chain is Elongation factor Ts from Nostoc sp. (strain PCC 7120 / SAG 25.82 / UTEX 2576).